The sequence spans 466 residues: 3-isopropylmalate dehydratase large subunit (466 aa).

[4Fe-4S] cluster-binding residues include Cys-347, Cys-407, and Cys-410.

The protein belongs to the aconitase/IPM isomerase family. LeuC type 1 subfamily. Heterodimer of LeuC and LeuD. Requires [4Fe-4S] cluster as cofactor.

The catalysed reaction is (2R,3S)-3-isopropylmalate = (2S)-2-isopropylmalate. The protein operates within amino-acid biosynthesis; L-leucine biosynthesis; L-leucine from 3-methyl-2-oxobutanoate: step 2/4. In terms of biological role, catalyzes the isomerization between 2-isopropylmalate and 3-isopropylmalate, via the formation of 2-isopropylmaleate. The polypeptide is 3-isopropylmalate dehydratase large subunit (Shewanella sediminis (strain HAW-EB3)).